We begin with the raw amino-acid sequence, 215 residues long: Pyrrolidone-carboxylate peptidase (215 aa).

Residues E80, C143, and H167 contribute to the active site.

Belongs to the peptidase C15 family. In terms of assembly, homotetramer.

The protein localises to the cytoplasm. It catalyses the reaction Release of an N-terminal pyroglutamyl group from a polypeptide, the second amino acid generally not being Pro.. Functionally, removes 5-oxoproline from various penultimate amino acid residues except L-proline. The chain is Pyrrolidone-carboxylate peptidase from Bacillus anthracis.